Reading from the N-terminus, the 176-residue chain is ATP-dependent protease subunit HslV (176 aa).

The active site involves Thr2. Na(+) is bound by residues Gly157, Cys160, and Thr163.

The protein belongs to the peptidase T1B family. HslV subfamily. As to quaternary structure, a double ring-shaped homohexamer of HslV is capped on each side by a ring-shaped HslU homohexamer. The assembly of the HslU/HslV complex is dependent on binding of ATP.

It is found in the cytoplasm. It catalyses the reaction ATP-dependent cleavage of peptide bonds with broad specificity.. Allosterically activated by HslU binding. Functionally, protease subunit of a proteasome-like degradation complex believed to be a general protein degrading machinery. This chain is ATP-dependent protease subunit HslV, found in Ectopseudomonas mendocina (strain ymp) (Pseudomonas mendocina).